Here is a 221-residue protein sequence, read N- to C-terminus: Vesicle transport v-SNARE 13 (221 aa).

Over 1–198 (MSQGFERYER…MTRRMNRNKW (198 aa)) the chain is Cytoplasmic. The stretch at 32 to 93 (EQKKQNLSEI…FKTEVKRITS (62 aa)) forms a coiled coil. The chain crosses the membrane as a helical; Anchor for type IV membrane protein span at residues 199-219 (TIGAIITVLVLAIIFILYFKL). Over 220 to 221 (TR) the chain is Vesicular.

Belongs to the VTI1 family. Forms SNARE complexes with t-SNAREs. As to expression, expressed at low levels in roots, stems, flowers and leaves.

The protein localises to the vacuole membrane. The protein resides in the prevacuolar compartment membrane. Its subcellular location is the endosome membrane. It localises to the early endosome membrane. May function as a v-SNARE responsible for targeting vesicles involved in the secretory pathway. Involved in actin-dependent endosomal trafficking pathways associated with the vacuole within root hairs and root tip epidermal cells. Essential for cell wall organization and polarized root hair growth. Also required for the localization of SYP41 to the trans-Golgi network in root hair cells. The protein is Vesicle transport v-SNARE 13 of Arabidopsis thaliana (Mouse-ear cress).